The primary structure comprises 24 residues: Hyaluronidase (24 aa).

Expressed by the venom gland.

It localises to the secreted. The enzyme catalyses Random hydrolysis of (1-&gt;4)-linkages between N-acetyl-beta-D-glucosamine and D-glucuronate residues in hyaluronate.. Functionally, possesses high activity against hyaluronan in vitro. The polypeptide is Hyaluronidase (Tityus stigmurus (Brazilian scorpion)).